A 516-amino-acid chain; its full sequence is MNVFFMFSLLFLAALESCADDKNPLEEEFFEADYEEFLLIAKNGLQQTSNPKRVVIVGAGMSGLSAAYVLAKTGHEVILLEASERVGGRVSTYRNDQEGWYANLGPMRLPERHRIVREYIRKFGLQLNEFSQENENAWYFIKNIRKRVGEVNKDPGVLEYPVKPSEKGKSAPQLYRDSLQKIIEEYGRSNCSYILNKYDTYSTKDYLIKEGNLSPGAVDMVGDLLNEDSGYYVSFIESLKPDDIFAYENRFDEIVGGFDKLPTSMYQAIQEKVRLNVRVIKIQQDVKEVTVTYQTPAKNLSYVTADYVIVCTTSGAARRIKFEPPLPLKKAHALRSVHYRSGTKIFLTCTKKFWEDDGIHGGKSITDRPSRLIHYPNHNFPNGIGVLVIFTIADDADFFLALDNKTIADIVIHDLSLIHQLPKEKIRDLCYVSMIQKWSLDKYAMGGITTFTPYQFQHFSEALTAPVDRIYFAGEYTAQAHGWIDSTIKSGLTAARDVNRASENPSGIHLSNDNEL.

A signal peptide spans 1–18 (MNVFFMFSLLFLAALESC). Residues 61–62 (MS), 81–82 (EA), Arg-89, and 105–108 (GPMR) each bind FAD. A substrate-binding site is contributed by Arg-108. Asn-190 is a glycosylation site (N-linked (GlcNAc...) asparagine). Val-279 is an FAD binding site. Residues Asn-299 and Asn-404 are each glycosylated (N-linked (GlcNAc...) asparagine). A disulfide bridge connects residues Cys-349 and Cys-430. FAD is bound by residues Glu-475 and 482 to 487 (GWIDST). 482 to 483 (GW) is a substrate binding site.

The protein belongs to the flavin monoamine oxidase family. FIG1 subfamily. Homodimer; non-covalently linked. It depends on FAD as a cofactor. In terms of processing, N-glycosylated (14%). The enzymatic activity remains unchanged after deglycosylation. In terms of tissue distribution, expressed by the venom gland.

It localises to the secreted. The enzyme catalyses an L-alpha-amino acid + O2 + H2O = a 2-oxocarboxylate + H2O2 + NH4(+). It catalyses the reaction L-leucine + O2 + H2O = 4-methyl-2-oxopentanoate + H2O2 + NH4(+). The catalysed reaction is L-phenylalanine + O2 + H2O = 3-phenylpyruvate + H2O2 + NH4(+). It carries out the reaction L-tryptophan + O2 + H2O = indole-3-pyruvate + H2O2 + NH4(+). The enzyme catalyses L-methionine + O2 + H2O = 4-methylsulfanyl-2-oxobutanoate + H2O2 + NH4(+). It catalyses the reaction L-isoleucine + O2 + H2O = (S)-3-methyl-2-oxopentanoate + H2O2 + NH4(+). Inhibited by the substrate analog N-acetyl tryptophan. Catalyzes an oxidative deamination of predominantly hydrophobic and aromatic L-amino acids, thus producing hydrogen peroxide that may contribute to the diverse toxic effects of this enzyme. Is highly active on L-Met&gt;L-Leu&gt;L-Phe&gt;L-Trp=L-Ile. Binds to the cell surface and enables the production of highly localized concentration of hydrogen peroxide in or near the binding interfaces. Does not bind to phospholipids. Induces platelet-rich plasma aggregation, shows cytotoxic effects on some cancer cell lines (B16-F10 (mouse melanoma), PC12 (rat pheochromocytoma), MCF-7 and MDA-MB-231 (human breast carcinoma)) and shows antibacterial activities against both Gram-positive and Gram-negative bacteria. Also exhibits hemorrhage and edema. Does not show cytotoxicity on erythrocytes and peripheral blood mononuclear cells. Its effect on platelets is controversial, since it either induces aggregation or inhibits agonist-induced aggregation. These different effects are probably due to different experimental conditions. This Cerastes cerastes (Horned desert viper) protein is L-amino acid oxidase.